Here is a 287-residue protein sequence, read N- to C-terminus: Lectin 10 (287 aa).

Topologically, residues 1–11 (MALSNLKSNRT) are cytoplasmic. The helical transmembrane segment at 12–31 (LSSSLITIFIISLFLQYHNI) threads the bilayer. Residues 32-287 (KSQSSWQSRQ…IINWSFESAL (256 aa)) lie on the Extracellular side of the membrane. N-linked (GlcNAc...) asparagine glycosylation is found at N124, N147, N243, and N280.

It belongs to the leguminous lectin family.

It is found in the membrane. In terms of biological role, may be involved in arbuscular mycorrhizal (AM) symbiosis with AM fungi. This is Lectin 10 from Medicago truncatula (Barrel medic).